The chain runs to 1029 residues: Protein phosphatase 1 regulatory subunit 12A (1029 aa).

The KVKF motif signature appears at K35 to F38. 6 ANK repeats span residues D39 to Y68, D72 to Q101, E105 to A134, E138 to V164, S198 to I227, and D231 to T260. (3S)-3-hydroxyasparagine; by HIF1AN occurs at positions 67 and 100. N226 is modified ((3S)-3-hydroxyasparagine; by HIF1AN). The disordered stretch occupies residues L290–L786. Residues H291–P300 show a composition bias toward basic and acidic residues. S299 carries the post-translational modification Phosphoserine. A compositionally biased stretch (polar residues) spans I302–Q314. A compositionally biased stretch (basic and acidic residues) spans K318 to S353. A compositionally biased stretch (acidic residues) spans S357–A369. A compositionally biased stretch (low complexity) spans T385 to S402. 2 positions are modified to phosphoserine: S422 and S432. Basic and acidic residues predominate over residues S422 to S432. Phosphothreonine is present on T443. S445 is subject to Phosphoserine; by NUAK1. Y446 is subject to Phosphotyrosine. Over residues R469–L480 the composition is skewed to low complexity. The residue at position 472 (S472) is a Phosphoserine; by NUAK1. S473 carries the post-translational modification Phosphoserine; by CDK1. S477 is modified (phosphoserine). Over residues D481–G491 the composition is skewed to basic and acidic residues. 2 positions are modified to phosphoserine: S507 and S509. A compositionally biased stretch (polar residues) spans N540–R551. Over residues S564–S578 the composition is skewed to low complexity. A compositionally biased stretch (polar residues) spans S585 to A594. The segment covering T596–S610 has biased composition (low complexity). 2 positions are modified to phosphoserine: S601 and S618. The segment covering W614–S625 has biased composition (basic and acidic residues). Residues A626 to T656 are compositionally biased toward low complexity. Residues V671–R680 are compositionally biased toward basic and acidic residues. The interval R680–E863 is interaction with ROCK2. Over residues K681–R691 the composition is skewed to basic residues. Residues S690 and S693 each carry the phosphoserine; by PKA and PKG; in vitro modification. T694 is subject to Phosphothreonine; by ROCK1, ROCK2, CDC42BP, ZIPK/DAPK3 and RAF1. The span at R716–T765 shows a compositional bias: basic and acidic residues. The span at S771–L786 shows a compositional bias: low complexity. S801 bears the Phosphoserine mark. Residues A808–D927 form a disordered region. Positions L813–I839 are enriched in basic and acidic residues. Residues R840–S851 are compositionally biased toward basic residues. S851 carries the phosphoserine; by ROCK2 modification. A phosphoserine mark is found at S861 and S870. Residues Q866–Q882 show a composition bias toward basic and acidic residues. The segment covering T883 to S897 has biased composition (low complexity). 2 positions are modified to phosphoserine: S902 and S907. S909 is modified (phosphoserine; by NUAK1). Residues L913 to D927 are compositionally biased toward basic and acidic residues. S994 is subject to Phosphoserine.

In terms of assembly, PP1 comprises a catalytic subunit, PPP1CA, PPP1CB or PPP1CC, and one or several targeting or regulatory subunits. PPP1R12A mediates binding to myosin. Interacts with ARHA and CIT. Binds PPP1R12B, ROCK1 and IL16. Interacts directly with PRKG1. Non-covalent dimer of 2 dimers; PRKG1-PRKG1 and PPP1R12A-PPP1R12A. Interacts with SMTNL1. Interacts with PPP1CB; the interaction is direct. Interacts (when phosphorylated at Ser-445, Ser-472 and Ser-910) with 14-3-3. Interacts with ROCK1 and ROCK2. Interacts with isoform 1 and isoform 2 of ZIPK/DAPK3. Interacts with RAF1. Interacts with HIF1AN. Interacts with NCKAP1L. Post-translationally, phosphorylated by CIT (Rho-associated kinase). Phosphorylated cooperatively by ROCK1 and CDC42BP on Thr-694. Phosphorylated on upon DNA damage, probably by ATM or ATR. In vitro, phosphorylation of Ser-693 by PKA and PKG appears to prevent phosphorylation of the inhibitory site Thr-694, probably mediated by PRKG1. Phosphorylation at Ser-445, Ser-472 and Ser-909 by NUAK1 promotes interaction with 14-3-3, leading to inhibit interaction with myosin light chain MLC2, preventing dephosphorylation of MLC2. May be phosphorylated at Thr-694 by DMPK; may inhibit the myosin phosphatase activity. Phosphorylated at Ser-473 by CDK1 during mitosis, creating docking sites for the POLO box domains of PLK1. Subsequently, PLK1 binds and phosphorylates PPP1R12A. Expressed in striated and vascular smooth muscle, specificcally in type 2a fibers (at protein level). Expression levels are 20-30% higher in developed males than females (at protein level).

It is found in the cytoplasm. The protein localises to the cytoskeleton. Its subcellular location is the stress fiber. Key regulator of protein phosphatase 1C (PPP1C). Mediates binding to myosin. As part of the PPP1C complex, involved in dephosphorylation of PLK1. Capable of inhibiting HIF1AN-dependent suppression of HIF1A activity. The polypeptide is Protein phosphatase 1 regulatory subunit 12A (Mus musculus (Mouse)).